Reading from the N-terminus, the 230-residue chain is Acyl-protein thioesterase 1 (230 aa).

Catalysis depends on charge relay system residues S119, D174, and H208. N6-acetyllysine is present on K224.

The protein belongs to the AB hydrolase superfamily. AB hydrolase 2 family. In terms of assembly, homodimer. As to expression, platelets.

It localises to the cytoplasm. The protein resides in the cell membrane. The protein localises to the nucleus membrane. It is found in the endoplasmic reticulum. The enzyme catalyses S-hexadecanoyl-L-cysteinyl-[protein] + H2O = L-cysteinyl-[protein] + hexadecanoate + H(+). It catalyses the reaction 1-hexadecanoyl-sn-glycero-3-phosphocholine + H2O = sn-glycerol 3-phosphocholine + hexadecanoate + H(+). The catalysed reaction is a 1-(9Z-octadecenoyl)-2-acyl-sn-glycero-3-phosphocholine + H2O = a 2-acyl-sn-glycero-3-phosphocholine + (9Z)-octadecenoate + H(+). With respect to regulation, inhibited by palmostatin-B, leading to impair depalmitoylating of Ras. Functionally, acts as an acyl-protein thioesterase. Hydrolyzes fatty acids from S-acylated cysteine residues in proteins such as trimeric G alpha proteins or HRAS. Acts as a palmitoyl thioesterase that catalyzes depalmitoylation of proteins, such as ADRB2, KCNMA1 and SQSTM1. Acts as a negative regulator of autophagy by mediating palmitoylation of SQSTM1, decreasing affinity between SQSTM1 and ATG8 proteins and recruitment of ubiquitinated cargo proteins to autophagosomes. Acts as a lysophospholipase and hydrolyzes lysophosphatidylcholine (lyso-PC). Also hydrolyzes lysophosphatidylethanolamine (lyso-PE), lysophosphatidylinositol (lyso-PI) and lysophosphatidylserine (lyso-PS). Has much higher thioesterase activity than lysophospholipase activity. Contributes to the production of lysophosphatidic acid (LPA) during blood coagulation by recognizing and cleaving plasma phospholipids to generate lysophospholipids which in turn act as substrates for ENPP2 to produce LPA. This is Acyl-protein thioesterase 1 (LYPLA1) from Homo sapiens (Human).